We begin with the raw amino-acid sequence, 552 residues long: MDWQKNLLLAAIAAVILMLFIRWNHFQEQLPQHQAGNTPAGSSIAAIAPDSNGDIPSAVPTASDTPQATADSSKVELIQVKTDNLLVTINPLGGDIASVSLPRHFAKLNTPDEPFVLLDNRNNHTYVSQSGLIGTNGTDTAQGRPLFNSSSTSYELKEGSDGLVVDLTLQQGAVNITKRFSFKRGDYLIGVEYLIDNQAETPWSAQLYGQIKRDSQNFVKVSALEMNPYLGAAITTSEENYKKIHFEDIAKQTFETSRQGGWVAMVQHYFISAWIPDASSQVNYKLRKLGDQDLYLLGFTTQPVVVEPGSKGVIKASFYAGPKDTERLEEISPYLDLTVDYGWLWWIAKPLFAFLKFIHGFLGNWGLAIIGLTLSVKLLFFPLSAASYRSMAKMRKLQPKLLELKERYGEDRQKFSQEMMKLYKTEQVNPFGGCLPLLIQMPVFIALYWVLMESVELRHAPFFGWIEDLSRMDPYFVLPIIYGATMWIMQKLNPQPTDPMQARIMNMLPFVFTFMFLWFPAGLVLYWVTNNLLSIAQQYVITRQIERADSKA.

A helical transmembrane segment spans residues 6–26 (NLLLAAIAAVILMLFIRWNHF). Polar residues-rich tracts occupy residues 32–41 (QHQAGNTPAG) and 60–70 (PTASDTPQATA). A disordered region spans residues 32-70 (QHQAGNTPAGSSIAAIAPDSNGDIPSAVPTASDTPQATA). 4 helical membrane-spanning segments follow: residues 365–387 (WGLAIIGLTLSVKLLFFPLSAAS), 431–451 (FGGCLPLLIQMPVFIALYWVL), 472–492 (MDPYFVLPIIYGATMWIMQKL), and 508–528 (LPFVFTFMFLWFPAGLVLYWV).

It belongs to the OXA1/ALB3/YidC family. Type 1 subfamily. As to quaternary structure, interacts with the Sec translocase complex via SecD. Specifically interacts with transmembrane segments of nascent integral membrane proteins during membrane integration.

It is found in the cell inner membrane. Its function is as follows. Required for the insertion and/or proper folding and/or complex formation of integral membrane proteins into the membrane. Involved in integration of membrane proteins that insert both dependently and independently of the Sec translocase complex, as well as at least some lipoproteins. Aids folding of multispanning membrane proteins. This is Membrane protein insertase YidC from Cellvibrio japonicus (strain Ueda107) (Pseudomonas fluorescens subsp. cellulosa).